The following is a 134-amino-acid chain: MDFVMKQALGGATKDMGKMLGGDEEKDPDAQKKEEERQEALRQQEDERKQKHIRMETEREKVRQQIRDKYGLKKKEEKEAEEKAAMEAPIEGSLTRPKKAIPAGCGDEDEEDEESILDTVLKYLPGPLQDMFKK.

The tract at residues 1 to 114 (MDFVMKQALG…CGDEDEEDEE (114 aa)) is disordered. The segment covering 15-85 (DMGKMLGGDE…EEKEAEEKAA (71 aa)) has biased composition (basic and acidic residues). The stretch at 29–84 (DAQKKEEERQEALRQQEDERKQKHIRMETEREKVRQQIRDKYGLKKKEEKEAEEKA) forms a coiled coil.

The protein belongs to the complexin/synaphin family. Binds to the SNARE core complex containing SNAP25, VAMP2 and STX1A. Nervous system. Present in electric organ (at protein level).

It is found in the cytoplasm. It localises to the cytosol. The protein localises to the presynapse. Its subcellular location is the nucleus. The protein resides in the perikaryon. Its function is as follows. Positively regulates a late step in synaptic vesicle exocytosis. In Narke japonica (Japanese sleeper ray), this protein is Complexin-2.